Consider the following 669-residue polypeptide: UvrABC system protein B (669 aa).

In terms of domain architecture, Helicase ATP-binding spans 27-414 (ESLQGEHKFQ…EARVIEQVIR (388 aa)). 40–47 (GATGTGKT) is an ATP binding site. Residues 93-116 (YYDYYQPEAYIPVTDTYIEKTASI) carry the Beta-hairpin motif. Residues 431–597 (QVDDLYGEIQ…PINKRANNAI (167 aa)) enclose the Helicase C-terminal domain. In terms of domain architecture, UVR spans 628 to 663 (PDLIQQLEEKMQEAAKKQEFEVAAIYRDRIQHLRDR).

Belongs to the UvrB family. In terms of assembly, forms a heterotetramer with UvrA during the search for lesions. Interacts with UvrC in an incision complex.

It localises to the cytoplasm. Its function is as follows. The UvrABC repair system catalyzes the recognition and processing of DNA lesions. A damage recognition complex composed of 2 UvrA and 2 UvrB subunits scans DNA for abnormalities. Upon binding of the UvrA(2)B(2) complex to a putative damaged site, the DNA wraps around one UvrB monomer. DNA wrap is dependent on ATP binding by UvrB and probably causes local melting of the DNA helix, facilitating insertion of UvrB beta-hairpin between the DNA strands. Then UvrB probes one DNA strand for the presence of a lesion. If a lesion is found the UvrA subunits dissociate and the UvrB-DNA preincision complex is formed. This complex is subsequently bound by UvrC and the second UvrB is released. If no lesion is found, the DNA wraps around the other UvrB subunit that will check the other stand for damage. The chain is UvrABC system protein B from Synechocystis sp. (strain ATCC 27184 / PCC 6803 / Kazusa).